The primary structure comprises 269 residues: MIEQQAGSRIRVEALAIDGQEHAAQWAQRLGLPLHDADADFALQLTDDGLQLQQLGDDVPGAVRVDFVEGAVAHRRLFGGGTGQMIAKAVGIQPGIRPSVLDATAGLGKDAFVLASLGCEMSLIERQPIIAALLEDGLARGRGDRDIGPIIARMRLLTGNSIEIIRSWVEEPPQVIYLDPMFPHREKTALVKKEMRLFRPLVGDDMDAPALLAAALALATHRVVVKRPRKAPCIDGPKPGYALDGKSSRYDIYPRKALKPKAVEPAPDL.

Residues 125-126 (ER) and aspartate 179 each bind S-adenosyl-L-methionine.

It belongs to the methyltransferase superfamily. RsmJ family.

Its subcellular location is the cytoplasm. The enzyme catalyses guanosine(1516) in 16S rRNA + S-adenosyl-L-methionine = N(2)-methylguanosine(1516) in 16S rRNA + S-adenosyl-L-homocysteine + H(+). Functionally, specifically methylates the guanosine in position 1516 of 16S rRNA. This chain is Ribosomal RNA small subunit methyltransferase J, found in Pseudomonas syringae pv. tomato (strain ATCC BAA-871 / DC3000).